Here is a 219-residue protein sequence, read N- to C-terminus: Protein-L-isoaspartate O-methyltransferase 2 (219 aa).

Residue Ser66 is part of the active site.

This sequence belongs to the methyltransferase superfamily. L-isoaspartyl/D-aspartyl protein methyltransferase family.

It is found in the cytoplasm. It catalyses the reaction [protein]-L-isoaspartate + S-adenosyl-L-methionine = [protein]-L-isoaspartate alpha-methyl ester + S-adenosyl-L-homocysteine. Catalyzes the methyl esterification of L-isoaspartyl residues in peptides and proteins that result from spontaneous decomposition of normal L-aspartyl and L-asparaginyl residues. It plays a role in the repair and/or degradation of damaged proteins. The polypeptide is Protein-L-isoaspartate O-methyltransferase 2 (Marinobacter nauticus (strain ATCC 700491 / DSM 11845 / VT8) (Marinobacter aquaeolei)).